The primary structure comprises 261 residues: Caveolae-associated protein 3 (261 aa).

An interaction with CAVIN1 region spans residues 1–84 (MRESALERGP…SNTLAQLLAK (84 aa)). The interval 20 to 78 (VHAVTVVTLLEKLASMLETLRERQGGLARRQGGLAGSVRRIQSGLGALSRSHDTTSNTL) is leucine-zipper. Phosphoserine is present on residues serine 62 and serine 70. A Glycyl lysine isopeptide (Lys-Gly) (interchain with G-Cter in SUMO2) cross-link involves residue lysine 128. The segment at 135–203 (ASAFQKAPEP…SGRKGPAAPP (69 aa)) is interaction with CAV1. The tract at residues 139–261 (QKAPEPLGPA…EALLQMESVA (123 aa)) is disordered. The segment covering 158–170 (LEAEVGESSDEEP) has biased composition (acidic residues). A phosphoserine mark is found at serine 165, serine 166, and serine 173. The segment covering 200-212 (AAPPPTPVKPPRL) has biased composition (pro residues). A compositionally biased stretch (low complexity) spans 213-231 (GPGRSAEAQPEAQPALEPT).

This sequence belongs to the CAVIN family. In terms of assembly, component of the CAVIN complex composed of CAVIN1, CAVIN2, CAVIN3 and CAVIN4. Interacts with PRKCD and with phosphatidylserine. Phosphatidylserine may form a bridge between PKC and PKC-binding partners and stabilize the binding. Interacts with PER2. Interacts with CAVIN1. Interacts (via leucine-zipper domain) with CAV1 in a cholesterol-sensitive manner. Interacts with EPS15L1. In terms of processing, in vitro, phosphorylated by PRKCD. In terms of tissue distribution, skeletal muscle, liver, stomach, lung, kidney and heart (at protein level). Strongly expressed in mammary and epithelial cells.

The protein resides in the cytoplasm. Its subcellular location is the membrane. It localises to the caveola. It is found in the cytosol. In terms of biological role, regulates the traffic and/or budding of caveolae. Plays a role in caveola formation in a tissue-specific manner. Required for the formation of caveolae in smooth muscle but not in the lung and heart endothelial cells. Regulates the equilibrium between cell surface-associated and cell surface-dissociated caveolae by promoting the rapid release of caveolae from the cell surface. Plays a role in the regulation of the circadian clock. Modulates the period length and phase of circadian gene expression and also regulates expression and interaction of the core clock components PER1/2 and CRY1/2. The sequence is that of Caveolae-associated protein 3 from Homo sapiens (Human).